The chain runs to 243 residues: Orotidine 5'-phosphate decarboxylase (243 aa).

Residues D18, K39, D66–T75, T130, R192, Q201, G221, and R222 each bind substrate. K68 serves as the catalytic Proton donor.

Belongs to the OMP decarboxylase family. Type 1 subfamily. Homodimer.

It catalyses the reaction orotidine 5'-phosphate + H(+) = UMP + CO2. The protein operates within pyrimidine metabolism; UMP biosynthesis via de novo pathway; UMP from orotate: step 2/2. Its function is as follows. Catalyzes the decarboxylation of orotidine 5'-monophosphate (OMP) to uridine 5'-monophosphate (UMP). This Synechococcus sp. (strain CC9311) protein is Orotidine 5'-phosphate decarboxylase.